Consider the following 199-residue polypeptide: MTTLTAQQIACVYAWLAQLFSRELDDEQLTQIASAQMAEWFSLLKSEPPLAAAVNELENCIATLTVRDDARLELAADFCGLFLMTDKQAALPYASAYKQDEQEIKRLLVEAGMETSGNFNEPADHLAIYLELLSHLHFSLGEGTVPARRIDSLRQKTLTALWQWLPEFAARCHQYDSFGFYAALSQLLLVLVECDHQNK.

This sequence belongs to the TorD/DmsD family. TorD subfamily.

The protein localises to the cytoplasm. Its function is as follows. Involved in the biogenesis of TorA. Acts on TorA before the insertion of the molybdenum cofactor and, as a result, probably favors a conformation of the apoenzyme that is competent for acquiring the cofactor. The polypeptide is Chaperone protein TorD (Shigella boydii serotype 18 (strain CDC 3083-94 / BS512)).